The chain runs to 257 residues: Thiazole synthase (257 aa).

K99 functions as the Schiff-base intermediate with DXP in the catalytic mechanism. Residues G160, 186-187 (AG), and 208-209 (NT) contribute to the 1-deoxy-D-xylulose 5-phosphate site.

Belongs to the ThiG family. In terms of assembly, homotetramer. Forms heterodimers with either ThiH or ThiS.

The protein localises to the cytoplasm. It catalyses the reaction [ThiS sulfur-carrier protein]-C-terminal-Gly-aminoethanethioate + 2-iminoacetate + 1-deoxy-D-xylulose 5-phosphate = [ThiS sulfur-carrier protein]-C-terminal Gly-Gly + 2-[(2R,5Z)-2-carboxy-4-methylthiazol-5(2H)-ylidene]ethyl phosphate + 2 H2O + H(+). Its pathway is cofactor biosynthesis; thiamine diphosphate biosynthesis. Catalyzes the rearrangement of 1-deoxy-D-xylulose 5-phosphate (DXP) to produce the thiazole phosphate moiety of thiamine. Sulfur is provided by the thiocarboxylate moiety of the carrier protein ThiS. In vitro, sulfur can be provided by H(2)S. The sequence is that of Thiazole synthase from Thermodesulfovibrio yellowstonii (strain ATCC 51303 / DSM 11347 / YP87).